A 152-amino-acid chain; its full sequence is Lipoprotein signal peptidase (152 aa).

The next 3 helical transmembrane spans lie at 5–25, 61–81, and 84–104; these read LFVLSLILLVALDQLSKFWIV, WFFVVITVLVIGYAIYYLATH, and LNIWKQLALLLIISGGIGNFI. Residues D114 and D130 contribute to the active site. A helical transmembrane segment spans residues 125–145; it reads IFNVADSYLTVGVILLVICLW.

It belongs to the peptidase A8 family.

It localises to the cell membrane. It catalyses the reaction Release of signal peptides from bacterial membrane prolipoproteins. Hydrolyzes -Xaa-Yaa-Zaa-|-(S,diacylglyceryl)Cys-, in which Xaa is hydrophobic (preferably Leu), and Yaa (Ala or Ser) and Zaa (Gly or Ala) have small, neutral side chains.. Its pathway is protein modification; lipoprotein biosynthesis (signal peptide cleavage). Its function is as follows. This protein specifically catalyzes the removal of signal peptides from prolipoproteins. The polypeptide is Lipoprotein signal peptidase (Streptococcus pyogenes serotype M2 (strain MGAS10270)).